The sequence spans 228 residues: Cutinase CUT1 (228 aa).

The first 16 residues, 1-16 (MQFITVALTLIALASA), serve as a signal peptide directing secretion. Cysteines 49 and 127 form a disulfide. Ser-138 acts as the Nucleophile in catalysis. A disulfide bond links Cys-189 and Cys-196. Residue Asn-190 is glycosylated (N-linked (GlcNAc...) asparagine). Residue Asp-193 is part of the active site. Residue His-206 is the Proton donor/acceptor of the active site.

The protein belongs to the cutinase family. In terms of processing, the 2 disulfide bonds play a critical role in holding the catalytic residues in juxta-position; reduction of the disulfide bridges results in the complete inactivation of the enzyme.

The protein localises to the secreted. The catalysed reaction is cutin + H2O = cutin monomers.. Functionally, catalyzes the hydrolysis of complex carboxylic polyesters found in the cell wall of plants. Degrades cutin, a macromolecule that forms the structure of the plant cuticle. Required for efficient penetration of the host plant cuticle by the appressorium during the initial stage of fungal infection. This Pyricularia oryzae (strain 70-15 / ATCC MYA-4617 / FGSC 8958) (Rice blast fungus) protein is Cutinase CUT1.